The following is a 183-amino-acid chain: Mitochondrial import inner membrane translocase subunit tim17 (183 aa).

Helical transmembrane passes span 13 to 33 (AGGA…GLGF), 57 to 77 (GGNF…LSYI), and 107 to 127 (VQAA…QHMM). Residues 131–141 (MQAQQEEMTQQ) show a composition bias toward polar residues. The segment at 131 to 183 (MQAQQEEMTQQHLEERKRYEEERKQREGERKKLNENGKSKKNKQQQNGENDLD) is disordered. Positions 142–168 (HLEERKRYEEERKQREGERKKLNENGK) are enriched in basic and acidic residues. Low complexity predominate over residues 174 to 183 (QQQNGENDLD).

The protein belongs to the Tim17/Tim22/Tim23 family.

Its subcellular location is the mitochondrion inner membrane. Functionally, may be involved in the translocation of transit peptide-containing proteins across the mitochondrial inner membrane. The protein is Mitochondrial import inner membrane translocase subunit tim17 (timm17) of Dictyostelium discoideum (Social amoeba).